Consider the following 486-residue polypeptide: Small ribosomal subunit protein uS4m (486 aa).

Residues 103 to 172 (KRLDFALFRA…AKKPSFQEAL (70 aa)) enclose the S4 RNA-binding domain.

Belongs to the universal ribosomal protein uS4 family. Component of the mitochondrial small ribosomal subunit (mt-SSU). Mature yeast 74S mitochondrial ribosomes consist of a small (37S) and a large (54S) subunit. The 37S small subunit contains a 15S ribosomal RNA (15S mt-rRNA) and 34 different proteins. The 54S large subunit contains a 21S rRNA (21S mt-rRNA) and 46 different proteins. uS3m, uS4m and uS5m form the narrow entry site of the mRNA channel.

The protein localises to the mitochondrion. In terms of biological role, component of the mitochondrial ribosome (mitoribosome), a dedicated translation machinery responsible for the synthesis of mitochondrial genome-encoded proteins, including at least some of the essential transmembrane subunits of the mitochondrial respiratory chain. The mitoribosomes are attached to the mitochondrial inner membrane and translation products are cotranslationally integrated into the membrane. This is Small ribosomal subunit protein uS4m (NAM9) from Saccharomyces cerevisiae (strain ATCC 204508 / S288c) (Baker's yeast).